A 140-amino-acid polypeptide reads, in one-letter code: Cysteine desulfuration protein SufE (140 aa).

Cys-51 acts as the Cysteine persulfide intermediate in catalysis.

This sequence belongs to the SufE family. Homodimer. Interacts with SufS.

It is found in the cytoplasm. The protein operates within cofactor biosynthesis; iron-sulfur cluster biosynthesis. In terms of biological role, participates in cysteine desulfuration mediated by SufS. Cysteine desulfuration mobilizes sulfur from L-cysteine to yield L-alanine and constitutes an essential step in sulfur metabolism for biosynthesis of a variety of sulfur-containing biomolecules. Functions as a sulfur acceptor for SufS, by mediating the direct transfer of the sulfur atom from the S-sulfanylcysteine of SufS, an intermediate product of cysteine desulfuration process. The polypeptide is Cysteine desulfuration protein SufE (Yersinia pestis bv. Antiqua (strain Antiqua)).